The following is a 1210-amino-acid chain: Disease resistance-like protein DSC2 (1210 aa).

Residues 59 to 223 (WTHQVFPSFR…KVAKDVSDVL (165 aa)) enclose the TIR domain. The active site involves Glu-134. One can recognise an NB-ARC domain in the interval 241-511 (ITRINSLLCL…CLFNGCQVNH (271 aa)). LRR repeat units lie at residues 662 to 685 (AKFL…IQPL), 686 to 709 (KNLK…SNAT), 711 to 732 (LESL…IRGT), 756 to 780 (ATSL…LPGD), 783 to 804 (MRSL…PEIS), 805 to 828 (TNIQ…RLWS), 830 to 848 (LDKL…PPVP), 849 to 873 (DGIS…NLSQ), and 940 to 970 (LPEL…NLSQ).

It belongs to the disease resistance NB-LRR family. As to quaternary structure, interacts with DSC1.

It carries out the reaction NAD(+) + H2O = ADP-D-ribose + nicotinamide + H(+). Functionally, TIR-NB-LRR receptor-like protein involved in plant defense. Acts as a trigger of hypersensitive response (HR). Functions as a guard of CAMTA3, a negative regulator of immunity, during pathogen infection. The sequence is that of Disease resistance-like protein DSC2 from Arabidopsis thaliana (Mouse-ear cress).